Here is a 342-residue protein sequence, read N- to C-terminus: Holliday junction branch migration complex subunit RuvB (342 aa).

A large ATPase domain (RuvB-L) region spans residues 1–185 (MRKDYLNSNK…FGINTRLAYY (185 aa)). ATP is bound by residues L24, R25, G66, K69, T70, T71, 132-134 (EDF), R175, Y185, and R222. T70 lines the Mg(2+) pocket. Positions 186–256 (DVTLLTQIVK…IAQMALKALD (71 aa)) are small ATPAse domain (RuvB-S). The interval 259 to 342 (EDGLDEMDNR…PPQRAGTLFE (84 aa)) is head domain (RuvB-H). R314 and R319 together coordinate DNA.

It belongs to the RuvB family. As to quaternary structure, homohexamer. Forms an RuvA(8)-RuvB(12)-Holliday junction (HJ) complex. HJ DNA is sandwiched between 2 RuvA tetramers; dsDNA enters through RuvA and exits via RuvB. An RuvB hexamer assembles on each DNA strand where it exits the tetramer. Each RuvB hexamer is contacted by two RuvA subunits (via domain III) on 2 adjacent RuvB subunits; this complex drives branch migration. In the full resolvosome a probable DNA-RuvA(4)-RuvB(12)-RuvC(2) complex forms which resolves the HJ.

It is found in the cytoplasm. The enzyme catalyses ATP + H2O = ADP + phosphate + H(+). The RuvA-RuvB-RuvC complex processes Holliday junction (HJ) DNA during genetic recombination and DNA repair, while the RuvA-RuvB complex plays an important role in the rescue of blocked DNA replication forks via replication fork reversal (RFR). RuvA specifically binds to HJ cruciform DNA, conferring on it an open structure. The RuvB hexamer acts as an ATP-dependent pump, pulling dsDNA into and through the RuvAB complex. RuvB forms 2 homohexamers on either side of HJ DNA bound by 1 or 2 RuvA tetramers; 4 subunits per hexamer contact DNA at a time. Coordinated motions by a converter formed by DNA-disengaged RuvB subunits stimulates ATP hydrolysis and nucleotide exchange. Immobilization of the converter enables RuvB to convert the ATP-contained energy into a lever motion, pulling 2 nucleotides of DNA out of the RuvA tetramer per ATP hydrolyzed, thus driving DNA branch migration. The RuvB motors rotate together with the DNA substrate, which together with the progressing nucleotide cycle form the mechanistic basis for DNA recombination by continuous HJ branch migration. Branch migration allows RuvC to scan DNA until it finds its consensus sequence, where it cleaves and resolves cruciform DNA. The chain is Holliday junction branch migration complex subunit RuvB from Amoebophilus asiaticus (strain 5a2).